Consider the following 200-residue polypeptide: Recombination protein RecR (200 aa).

The C4-type zinc-finger motif lies at Cys57–Cys72. The Toprim domain maps to Ser80–Pro175.

The protein belongs to the RecR family.

May play a role in DNA repair. It seems to be involved in an RecBC-independent recombinational process of DNA repair. It may act with RecF and RecO. In Alcanivorax borkumensis (strain ATCC 700651 / DSM 11573 / NCIMB 13689 / SK2), this protein is Recombination protein RecR.